The chain runs to 409 residues: NADH-quinone oxidoreductase subunit D (409 aa).

Belongs to the complex I 49 kDa subunit family. In terms of assembly, NDH-1 is composed of 14 different subunits. Subunits NuoB, C, D, E, F, and G constitute the peripheral sector of the complex.

The protein resides in the cell inner membrane. The catalysed reaction is a quinone + NADH + 5 H(+)(in) = a quinol + NAD(+) + 4 H(+)(out). Its function is as follows. NDH-1 shuttles electrons from NADH, via FMN and iron-sulfur (Fe-S) centers, to quinones in the respiratory chain. The immediate electron acceptor for the enzyme in this species is believed to be ubiquinone. Couples the redox reaction to proton translocation (for every two electrons transferred, four hydrogen ions are translocated across the cytoplasmic membrane), and thus conserves the redox energy in a proton gradient. In Campylobacter curvus (strain 525.92), this protein is NADH-quinone oxidoreductase subunit D.